The chain runs to 160 residues: S-ribosylhomocysteine lyase (160 aa).

Fe cation contacts are provided by His57, His61, and Cys127.

Belongs to the LuxS family. Homodimer. Fe cation is required as a cofactor.

It carries out the reaction S-(5-deoxy-D-ribos-5-yl)-L-homocysteine = (S)-4,5-dihydroxypentane-2,3-dione + L-homocysteine. Its function is as follows. Involved in the synthesis of autoinducer 2 (AI-2) which is secreted by bacteria and is used to communicate both the cell density and the metabolic potential of the environment. The regulation of gene expression in response to changes in cell density is called quorum sensing. Catalyzes the transformation of S-ribosylhomocysteine (RHC) to homocysteine (HC) and 4,5-dihydroxy-2,3-pentadione (DPD). The sequence is that of S-ribosylhomocysteine lyase from Streptococcus agalactiae serotype V (strain ATCC BAA-611 / 2603 V/R).